The sequence spans 272 residues: Acetylglutamate kinase (272 aa).

Residues 41-42, Arg-63, and Asn-166 each bind substrate; that span reads GG.

The protein belongs to the acetylglutamate kinase family. ArgB subfamily.

The protein resides in the cytoplasm. The catalysed reaction is N-acetyl-L-glutamate + ATP = N-acetyl-L-glutamyl 5-phosphate + ADP. The protein operates within amino-acid biosynthesis; L-arginine biosynthesis; N(2)-acetyl-L-ornithine from L-glutamate: step 2/4. Catalyzes the ATP-dependent phosphorylation of N-acetyl-L-glutamate. In Anaeromyxobacter sp. (strain K), this protein is Acetylglutamate kinase.